The following is a 393-amino-acid chain: Calreticulin (393 aa).

The N-terminal stretch at 1-16 is a signal peptide; it reads MLSILLTLLLSKYALG. A glycan (N-linked (GlcNAc...) asparagine) is linked at Asn-27. An intrachain disulfide couples Cys-103 to Cys-135. The an alpha-D-glucoside site is built by Tyr-107, Lys-109, Tyr-126, and Asp-133. Repeat copies occupy residues 189–200, 208–219, 225–236, 242–253, 257–267, 271–281, and 285–295. Residues 189 to 253 are 4 X 12 AA approximate repeats; sequence VEEGSLEDDW…DAKKPDDWDD (65 aa). The segment at 194 to 277 is disordered; the sequence is LEDDWDMLPP…EYKGEWTPRR (84 aa). A compositionally biased stretch (basic and acidic residues) spans 202 to 216; it reads PPKKIDDPNDKKPDD. Acidic residues predominate over residues 217 to 226; it reads WVDEQFIDDP. Composition is skewed to basic and acidic residues over residues 227–249 and 258–277; these read DDKK…KKPD and EWER…TPRR. The interval 257–295 is 3 X 11 AA approximate repeats; the sequence is GEWERPQKDNPEYKGEWTPRRIDNPKYKGEWKPVQIDNP. Asp-315 contributes to the an alpha-D-glucoside binding site. The disordered stretch occupies residues 351-393; it reads AEVAKEQSSAKDDKEEAEETKERKELPYDAKASDEPSGDHDEL. Residues 390–393 carry the Prevents secretion from ER motif; that stretch reads HDEL.

The protein belongs to the calreticulin family.

It localises to the endoplasmic reticulum lumen. Functionally, molecular calcium-binding chaperone promoting folding, oligomeric assembly and quality control in the ER via the calreticulin/calnexin cycle. This lectin may interact transiently with almost all of the monoglucosylated glycoproteins that are synthesized in the ER. This is Calreticulin from Schistosoma mansoni (Blood fluke).